A 311-amino-acid chain; its full sequence is Biotin synthase (311 aa).

The Radical SAM core domain maps to 32 to 258 (NGVQFCQLLN…LFPLSRIRLA (227 aa)). The [4Fe-4S] cluster site is built by Cys47, Cys51, and Cys54. [2Fe-2S] cluster-binding residues include Cys91, Cys124, Cys184, and Arg256.

The protein belongs to the radical SAM superfamily. Biotin synthase family. As to quaternary structure, homodimer. Requires [4Fe-4S] cluster as cofactor. It depends on [2Fe-2S] cluster as a cofactor.

It carries out the reaction (4R,5S)-dethiobiotin + (sulfur carrier)-SH + 2 reduced [2Fe-2S]-[ferredoxin] + 2 S-adenosyl-L-methionine = (sulfur carrier)-H + biotin + 2 5'-deoxyadenosine + 2 L-methionine + 2 oxidized [2Fe-2S]-[ferredoxin]. It participates in cofactor biosynthesis; biotin biosynthesis; biotin from 7,8-diaminononanoate: step 2/2. Functionally, catalyzes the conversion of dethiobiotin (DTB) to biotin by the insertion of a sulfur atom into dethiobiotin via a radical-based mechanism. This Methylacidiphilum infernorum (isolate V4) (Methylokorus infernorum (strain V4)) protein is Biotin synthase.